A 300-amino-acid polypeptide reads, in one-letter code: Bifunctional protein FolD (300 aa).

NADP(+)-binding positions include 169–171 and isoleucine 235; that span reads GHS.

The protein belongs to the tetrahydrofolate dehydrogenase/cyclohydrolase family. As to quaternary structure, homodimer.

The enzyme catalyses (6R)-5,10-methylene-5,6,7,8-tetrahydrofolate + NADP(+) = (6R)-5,10-methenyltetrahydrofolate + NADPH. It carries out the reaction (6R)-5,10-methenyltetrahydrofolate + H2O = (6R)-10-formyltetrahydrofolate + H(+). The protein operates within one-carbon metabolism; tetrahydrofolate interconversion. Catalyzes the oxidation of 5,10-methylenetetrahydrofolate to 5,10-methenyltetrahydrofolate and then the hydrolysis of 5,10-methenyltetrahydrofolate to 10-formyltetrahydrofolate. The chain is Bifunctional protein FolD from Rhodobacter capsulatus (strain ATCC BAA-309 / NBRC 16581 / SB1003).